A 305-amino-acid polypeptide reads, in one-letter code: ADP,ATP carrier protein (305 aa).

3 Solcar repeats span residues 8-101 (SNFA…IKAM), 112-204 (KWFA…LKPL), and 212-298 (NSFL…LQVI). 5 consecutive transmembrane segments (helical) span residues 10–37 (FAID…VKLL), 78–102 (TANV…KAMF), 110–130 (YAKW…LSLL), 180–201 (FLPS…YDSL), and 215–235 (LASF…SYPL). ADP-binding residues include arginine 83 and lysine 95. Position 239 (arginine 239) interacts with ADP. The interval 239 to 244 (RRRMMM) is important for transport activity. Positions 239–244 (RRRMMM) match the Nucleotide carrier signature motif motif. A helical membrane pass occupies residues 275–295 (CGANILRGVAGAGVISMYDQL).

It belongs to the mitochondrial carrier (TC 2.A.29) family. In terms of assembly, monomer.

The protein localises to the mitochondrion inner membrane. It carries out the reaction ADP(in) + ATP(out) = ADP(out) + ATP(in). The matrix-open state (m-state) is inhibited by the membrane-permeable bongkrekic acid (BKA). The cytoplasmic-open state (c-state) is inhibited by the membrane-impermeable toxic inhibitor carboxyatractyloside (CATR). Its function is as follows. ADP:ATP antiporter that mediates import of ADP into the mitochondrial matrix for ATP synthesis, and export of ATP out to fuel the cell. Cycles between the cytoplasmic-open state (c-state) and the matrix-open state (m-state): operates by the alternating access mechanism with a single substrate-binding site intermittently exposed to either the cytosolic (c-state) or matrix (m-state) side of the inner mitochondrial membrane. This is ADP,ATP carrier protein (AAC) from Kluyveromyces lactis (strain ATCC 8585 / CBS 2359 / DSM 70799 / NBRC 1267 / NRRL Y-1140 / WM37) (Yeast).